We begin with the raw amino-acid sequence, 313 residues long: Ribosomal RNA small subunit methyltransferase H (313 aa).

Residues Ala33 to His35, Glu52, Phe80, Asp101, and Gln108 contribute to the S-adenosyl-L-methionine site.

The protein belongs to the methyltransferase superfamily. RsmH family.

It is found in the cytoplasm. It carries out the reaction cytidine(1402) in 16S rRNA + S-adenosyl-L-methionine = N(4)-methylcytidine(1402) in 16S rRNA + S-adenosyl-L-homocysteine + H(+). Functionally, specifically methylates the N4 position of cytidine in position 1402 (C1402) of 16S rRNA. The sequence is that of Ribosomal RNA small subunit methyltransferase H from Spiroplasma kunkelii.